The primary structure comprises 282 residues: Phosphatidylserine decarboxylase proenzyme (282 aa).

Residues Asp88, His145, and Ser248 each act as charge relay system; for autoendoproteolytic cleavage activity in the active site. Ser248 serves as the catalytic Schiff-base intermediate with substrate; via pyruvic acid; for decarboxylase activity. A Pyruvic acid (Ser); by autocatalysis modification is found at Ser248.

This sequence belongs to the phosphatidylserine decarboxylase family. PSD-B subfamily. Prokaryotic type I sub-subfamily. Heterodimer of a large membrane-associated beta subunit and a small pyruvoyl-containing alpha subunit. Pyruvate is required as a cofactor. Post-translationally, is synthesized initially as an inactive proenzyme. Formation of the active enzyme involves a self-maturation process in which the active site pyruvoyl group is generated from an internal serine residue via an autocatalytic post-translational modification. Two non-identical subunits are generated from the proenzyme in this reaction, and the pyruvate is formed at the N-terminus of the alpha chain, which is derived from the carboxyl end of the proenzyme. The autoendoproteolytic cleavage occurs by a canonical serine protease mechanism, in which the side chain hydroxyl group of the serine supplies its oxygen atom to form the C-terminus of the beta chain, while the remainder of the serine residue undergoes an oxidative deamination to produce ammonia and the pyruvoyl prosthetic group on the alpha chain. During this reaction, the Ser that is part of the protease active site of the proenzyme becomes the pyruvoyl prosthetic group, which constitutes an essential element of the active site of the mature decarboxylase.

The protein resides in the cell membrane. The catalysed reaction is a 1,2-diacyl-sn-glycero-3-phospho-L-serine + H(+) = a 1,2-diacyl-sn-glycero-3-phosphoethanolamine + CO2. The protein operates within phospholipid metabolism; phosphatidylethanolamine biosynthesis; phosphatidylethanolamine from CDP-diacylglycerol: step 2/2. Its function is as follows. Catalyzes the formation of phosphatidylethanolamine (PtdEtn) from phosphatidylserine (PtdSer). This chain is Phosphatidylserine decarboxylase proenzyme, found in Dechloromonas aromatica (strain RCB).